The following is a 101-amino-acid chain: Small ribosomal subunit protein uS14A (101 aa).

The protein belongs to the universal ribosomal protein uS14 family. Part of the 30S ribosomal subunit. Contacts proteins S3 and S10.

In terms of biological role, binds 16S rRNA, required for the assembly of 30S particles and may also be responsible for determining the conformation of the 16S rRNA at the A site. The polypeptide is Small ribosomal subunit protein uS14A (Mycolicibacterium smegmatis (strain ATCC 700084 / mc(2)155) (Mycobacterium smegmatis)).